A 680-amino-acid polypeptide reads, in one-letter code: UvrABC system protein B (680 aa).

The Helicase ATP-binding domain occupies 27–192; the sequence is SNIEAGVTDQ…ERNDYDFHRG (166 aa). 40-47 contacts ATP; it reads GVTGSGKT. Positions 93-116 match the Beta-hairpin motif; the sequence is YYDYYQPEAYVPSSDTYIEKDSSI. The 163-residue stretch at 432-594 folds into the Helicase C-terminal domain; that stretch reads QVDDLLGECR…IVPATIRKAV (163 aa). Residues 637 to 672 form the UVR domain; that stretch reads AKQIQQLERDMREAAKELEFERAAELRDRIRLLREH.

The protein belongs to the UvrB family. Forms a heterotetramer with UvrA during the search for lesions. Interacts with UvrC in an incision complex.

The protein resides in the cytoplasm. Functionally, the UvrABC repair system catalyzes the recognition and processing of DNA lesions. A damage recognition complex composed of 2 UvrA and 2 UvrB subunits scans DNA for abnormalities. Upon binding of the UvrA(2)B(2) complex to a putative damaged site, the DNA wraps around one UvrB monomer. DNA wrap is dependent on ATP binding by UvrB and probably causes local melting of the DNA helix, facilitating insertion of UvrB beta-hairpin between the DNA strands. Then UvrB probes one DNA strand for the presence of a lesion. If a lesion is found the UvrA subunits dissociate and the UvrB-DNA preincision complex is formed. This complex is subsequently bound by UvrC and the second UvrB is released. If no lesion is found, the DNA wraps around the other UvrB subunit that will check the other stand for damage. The chain is UvrABC system protein B from Nitratidesulfovibrio vulgaris (strain DSM 19637 / Miyazaki F) (Desulfovibrio vulgaris).